Reading from the N-terminus, the 1368-residue chain is DNA-directed RNA polymerase subunit beta (1368 aa).

Belongs to the RNA polymerase beta chain family. In terms of assembly, the RNAP catalytic core consists of 2 alpha, 1 beta, 1 beta' and 1 omega subunit. When a sigma factor is associated with the core the holoenzyme is formed, which can initiate transcription.

The enzyme catalyses RNA(n) + a ribonucleoside 5'-triphosphate = RNA(n+1) + diphosphate. Functionally, DNA-dependent RNA polymerase catalyzes the transcription of DNA into RNA using the four ribonucleoside triphosphates as substrates. This chain is DNA-directed RNA polymerase subunit beta, found in Syntrophotalea carbinolica (strain DSM 2380 / NBRC 103641 / GraBd1) (Pelobacter carbinolicus).